The following is a 367-amino-acid chain: Probable trehalose-phosphate phosphatase 4 (367 aa).

The protein belongs to the trehalose phosphatase family. Requires a divalent metal cation as cofactor.

The enzyme catalyses alpha,alpha-trehalose 6-phosphate + H2O = alpha,alpha-trehalose + phosphate. The protein operates within glycan biosynthesis; trehalose biosynthesis. Removes the phosphate from trehalose 6-phosphate to produce free trehalose. Trehalose accumulation in plant may improve abiotic stress tolerance. This is Probable trehalose-phosphate phosphatase 4 (TPP4) from Oryza sativa subsp. japonica (Rice).